Consider the following 58-residue polypeptide: Small ribosomal subunit protein bS21A (58 aa).

The interval Tyr-38–Asn-58 is disordered. The segment covering Ala-49–Asn-58 has biased composition (basic and acidic residues).

The protein belongs to the bacterial ribosomal protein bS21 family.

This chain is Small ribosomal subunit protein bS21A, found in Trichormus variabilis (strain ATCC 29413 / PCC 7937) (Anabaena variabilis).